A 139-amino-acid chain; its full sequence is Large ribosomal subunit protein uL16 (139 aa).

It belongs to the universal ribosomal protein uL16 family. Part of the 50S ribosomal subunit.

In terms of biological role, binds 23S rRNA and is also seen to make contacts with the A and possibly P site tRNAs. The polypeptide is Large ribosomal subunit protein uL16 (Parvibaculum lavamentivorans (strain DS-1 / DSM 13023 / NCIMB 13966)).